The sequence spans 302 residues: Probable alpha-L-glutamate ligase (302 aa).

The ATP-grasp domain maps to 105 to 288 (LQLLARKGIP…LAGKIIEYIE (184 aa)). ATP-binding positions include lysine 142, 179 to 180 (EF), aspartate 188, and 212 to 214 (RAN). Aspartate 249, glutamate 261, and asparagine 263 together coordinate Mg(2+). Aspartate 249, glutamate 261, and asparagine 263 together coordinate Mn(2+).

The protein belongs to the RimK family. Mg(2+) serves as cofactor. It depends on Mn(2+) as a cofactor.

The chain is Probable alpha-L-glutamate ligase from Legionella pneumophila (strain Paris).